Consider the following 346-residue polypeptide: Methylthioribose-1-phosphate isomerase (346 aa).

Substrate is bound by residues 48–50, Arg-88, and Gln-192; that span reads RGA. The active-site Proton donor is the Asp-233. 243–244 serves as a coordination point for substrate; it reads NK.

It belongs to the eIF-2B alpha/beta/delta subunits family. MtnA subfamily.

The enzyme catalyses 5-(methylsulfanyl)-alpha-D-ribose 1-phosphate = 5-(methylsulfanyl)-D-ribulose 1-phosphate. Its pathway is amino-acid biosynthesis; L-methionine biosynthesis via salvage pathway; L-methionine from S-methyl-5-thio-alpha-D-ribose 1-phosphate: step 1/6. Its function is as follows. Catalyzes the interconversion of methylthioribose-1-phosphate (MTR-1-P) into methylthioribulose-1-phosphate (MTRu-1-P). This chain is Methylthioribose-1-phosphate isomerase, found in Alcanivorax borkumensis (strain ATCC 700651 / DSM 11573 / NCIMB 13689 / SK2).